Consider the following 141-residue polypeptide: Early nodulin-like protein 19 (141 aa).

Residues methionine 1–alanine 26 form the signal peptide. Positions lysine 27–threonine 127 constitute a Phytocyanin domain. Residues asparagine 42 and asparagine 88 are each glycosylated (N-linked (GlcNAc...) asparagine). Cysteine 80 and cysteine 115 are joined by a disulfide.

This sequence belongs to the early nodulin-like (ENODL) family.

Functionally, may act as a carbohydrate transporter. This chain is Early nodulin-like protein 19, found in Arabidopsis thaliana (Mouse-ear cress).